The sequence spans 208 residues: MKGLFVTIEGPEGSGKTTLIQSLLPYFEQKEQKVMATREPGGIAISEDIRTILHKQEYTMMEARTEALLYAAARRQHLVEKVMPALNEDYLVLCDRFIDSSLAYQGYARGLGMDKVFEINRFATEDCMPSLTIYLDIEPEVGLARIAKDAGREVNRLDMEDISFHKRVREGYLQVVERFSDRIVLVNADQPMEKLIEEVIQVIEDKLL.

Residue 10–17 (GPEGSGKT) coordinates ATP.

Belongs to the thymidylate kinase family.

The enzyme catalyses dTMP + ATP = dTDP + ADP. Functionally, phosphorylation of dTMP to form dTDP in both de novo and salvage pathways of dTTP synthesis. The protein is Thymidylate kinase of Bacillus anthracis.